The primary structure comprises 342 residues: L-threonine 3-dehydrogenase (342 aa).

Residue C38 participates in Zn(2+) binding. Catalysis depends on charge relay system residues T40 and H43. Zn(2+)-binding residues include H63, E64, C93, C96, C99, and C107. Residues I175, D195, R200, 262–264, and 286–287 each bind NAD(+); these read LGI and IY.

It belongs to the zinc-containing alcohol dehydrogenase family. In terms of assembly, homotetramer. It depends on Zn(2+) as a cofactor.

The protein localises to the cytoplasm. The enzyme catalyses L-threonine + NAD(+) = (2S)-2-amino-3-oxobutanoate + NADH + H(+). Its pathway is amino-acid degradation; L-threonine degradation via oxydo-reductase pathway; glycine from L-threonine: step 1/2. Its function is as follows. Catalyzes the NAD(+)-dependent oxidation of L-threonine to 2-amino-3-ketobutyrate. The sequence is that of L-threonine 3-dehydrogenase from Paraburkholderia phymatum (strain DSM 17167 / CIP 108236 / LMG 21445 / STM815) (Burkholderia phymatum).